The primary structure comprises 248 residues: Protein GrpE (248 aa).

Residues 229–248 form a disordered region; that stretch reads AAPKEDTLPAQENQSSPADS. Residues 238–248 show a composition bias toward polar residues; the sequence is AQENQSSPADS.

Belongs to the GrpE family. In terms of assembly, homodimer.

It is found in the cytoplasm. Participates actively in the response to hyperosmotic and heat shock by preventing the aggregation of stress-denatured proteins, in association with DnaK and GrpE. It is the nucleotide exchange factor for DnaK and may function as a thermosensor. Unfolded proteins bind initially to DnaJ; upon interaction with the DnaJ-bound protein, DnaK hydrolyzes its bound ATP, resulting in the formation of a stable complex. GrpE releases ADP from DnaK; ATP binding to DnaK triggers the release of the substrate protein, thus completing the reaction cycle. Several rounds of ATP-dependent interactions between DnaJ, DnaK and GrpE are required for fully efficient folding. The polypeptide is Protein GrpE (Nostoc sp. (strain PCC 7120 / SAG 25.82 / UTEX 2576)).